The chain runs to 467 residues: Multiple inositol polyphosphate phosphatase 1 (467 aa).

Residues 1-15 (MRLLILLLLPLVAIA) form the signal peptide. Histidine 67 is a catalytic residue. Residues asparagine 120, asparagine 159, and asparagine 234 are each glycosylated (N-linked (GlcNAc...) asparagine). Glycine 441 is lipidated: GPI-anchor amidated glycine. The propeptide at 442-467 (GAPSLGSGVGGLLATTLAAMLVYLMH) is removed in mature form.

This sequence belongs to the histidine acid phosphatase family. MINPP1 subfamily. Post-translationally, N-glycosylated.

It is found in the cell membrane. The protein resides in the apical cell membrane. Its subcellular location is the basolateral cell membrane. The protein localises to the cell projection. It localises to the filopodium. It is found in the cell junction. It catalyses the reaction (2R)-2,3-bisphosphoglycerate + H2O = (2R)-2-phosphoglycerate + phosphate. The enzyme catalyses 1D-myo-inositol hexakisphosphate + H2O = 1D-myo-inositol 1,2,4,5,6-pentakisphosphate + phosphate. The catalysed reaction is 1D-myo-inositol 1,2,4,5,6-pentakisphosphate + H2O = 1D-myo-inositol 1,2,5,6-tetrakisphosphate + phosphate. It carries out the reaction 1D-myo-inositol 1,2,5,6-tetrakisphosphate + H2O = 1D-myo-inositol 1,2,6-trisphosphate + phosphate. Probable multiple inositol polyphosphate phosphatase that hydrolyzes 1D-myo-inositol 1,3,4,5,6-pentakisphosphate (InsP5[2OH]) and 1D-myo-inositol hexakisphosphate (InsP6) to a range of less phosphorylated inositol phosphates. This regulates the availability of these various small molecule second messengers and metal chelators which control many aspects of cell physiology. May have a dual substrate specificity, and function as a 2,3-bisphosphoglycerate 3-phosphatase hydrolyzing 2,3-bisphosphoglycerate to 2-phosphoglycerate. 2,3-bisphosphoglycerate (BPG) is formed as part of the Rapoport-Luebering glycolytic bypass. Has a role in embryonic tracheal development where it localizes to the leading edge of actively migrating branches. In these leading cells, enhances formation and/or maintenance of filopodia which may drive branch migration and elongation by cell-cell intercalation. The function in tracheal morphogenesis is dependent on its inositol polyphosphate phosphatase activity. This is Multiple inositol polyphosphate phosphatase 1 from Drosophila melanogaster (Fruit fly).